Here is a 585-residue protein sequence, read N- to C-terminus: Chaperonin CPN60-like 1, mitochondrial (585 aa).

The transit peptide at 1 to 32 (MYRLVSNVASKARIARKCTSQIGSRLNSTRNY) directs the protein to the mitochondrion.

Belongs to the chaperonin (HSP60) family.

The protein localises to the mitochondrion. Implicated in mitochondrial protein import and macromolecular assembly. May facilitate the correct folding of imported proteins. May also prevent misfolding and promote the refolding and proper assembly of unfolded polypeptides generated under stress conditions in the mitochondrial matrix. The protein is Chaperonin CPN60-like 1, mitochondrial of Arabidopsis thaliana (Mouse-ear cress).